The chain runs to 383 residues: Dimethylsulfoniopropionate lyase 6 (383 aa).

It belongs to the aspartate/glutamate racemases family. ALMA1 subfamily. Homotetramer.

The enzyme catalyses S,S-dimethyl-beta-propiothetin = acrylate + dimethyl sulfide + H(+). Its function is as follows. Mediates cleavage of dimethylsulfoniopropionate (DMSP) into dimethyl sulfide (DMS) and acrylate. DMS is the principal form by which sulfur is transported from oceans to the atmosphere and is a key component of the ocean sulfur cycle. The chain is Dimethylsulfoniopropionate lyase 6 from Emiliania huxleyi (strain CCMP1516).